The chain runs to 367 residues: Testis-specific serine/threonine-protein kinase 1 (367 aa).

In terms of domain architecture, Protein kinase spans 12–272 (YLLGINLGEG…IDEILSHCWM (261 aa)). Residues 18 to 26 (LGEGSYAKV) and Lys41 contribute to the ATP site. The active-site Proton acceptor is the Asp136. Thr174 bears the Phosphothreonine mark. The tract at residues 276 to 367 (ARGSPSVAIN…PQQPPETRAQ (92 aa)) is disordered. A compositionally biased stretch (basic and acidic residues) spans 303 to 314 (GSDKKSATKLEP).

It belongs to the protein kinase superfamily. CAMK Ser/Thr protein kinase family. Interacts with TSSK2. Interacts with HSP90; this interaction stabilizes TSSK1. Mg(2+) is required as a cofactor. Autophosphorylated. Post-translationally, ubiquitinated; HSP90 activity negatively regulates ubiquitination and degradation. In terms of tissue distribution, testis-specific. Present in sperm (at protein level).

It is found in the cytoplasm. The protein resides in the cytoplasmic vesicle. Its subcellular location is the secretory vesicle. The protein localises to the acrosome. It localises to the cell projection. It is found in the cilium. The protein resides in the flagellum. It catalyses the reaction L-seryl-[protein] + ATP = O-phospho-L-seryl-[protein] + ADP + H(+). It carries out the reaction L-threonyl-[protein] + ATP = O-phospho-L-threonyl-[protein] + ADP + H(+). Kinase activity is specifically inhibited by 2 classes of compounds: biphenyl compounds (1,1'-(biphenyl-4,4'-diyl)bis(2,2-dihydroxyethanone)) and 1,2,7-trialky-1H-imidazo[4,5-g]quinoxalin-6-one. Activated by phosphorylation on Thr-174 and potentially by autophosphorylation. In terms of biological role, testis-specific serine/threonine-protein kinase required during spermatid development. Phosphorylates 'Ser-288' of TSKS. Involved in the late stages of spermatogenesis, during the reconstruction of the cytoplasm. During spermatogenesis, required for the transformation of a ring-shaped structure around the base of the flagellum originating from the chromatoid body. This chain is Testis-specific serine/threonine-protein kinase 1 (TSSK1B), found in Homo sapiens (Human).